A 201-amino-acid polypeptide reads, in one-letter code: Aminoglycoside N(6')-acetyltransferase type 1 (201 aa).

Positions 25 to 192 (VTLRLMTEHD…PAVYMVQTRQ (168 aa)) constitute an N-acetyltransferase domain. The substrate site is built by Trp-51 and Asp-154. Position 159 (Asn-159) interacts with acetyl-CoA.

As to quaternary structure, homodimer.

The enzyme catalyses kanamycin B + acetyl-CoA = N(6')-acetylkanamycin B + CoA + H(+). In terms of biological role, catalyzes the transfer of an acetyl group from acetyl-CoA to the 6'-amino group of aminoglycoside molecules conferring resistance to antibiotics containing the purpurosamine ring including amikacin. This chain is Aminoglycoside N(6')-acetyltransferase type 1 (aacA4), found in Klebsiella pneumoniae.